The sequence spans 303 residues: MDQNLKEQILELKRQKNAIILAHYYQRPEVQEIADFIGDSYNLSKIAKENDADTIVFCGVKFMAESAKVLSPQKKVLLPQPKAGCPMADMADAEGLAALKAKHPNAKVVSYINSSVEVKALCDTCCTSSNAAKIVKRIDSDEIIFLPDKNLGSYVQEMVPEKNIILWDGFCKVHNMIIPTDIEEMKNKYGDMKILAHPECWKPVRDMADFIGSTGAMIDYAEKDTTSDKYLVVTETGIMYKMQERVPNKTFYPLRSMVCVNMKATHLEDVYNSLVNSTFEINIEENLRQKALTSLENMLILGR.

Iminosuccinate is bound by residues histidine 23 and serine 40. Cysteine 85 contacts [4Fe-4S] cluster. Iminosuccinate-binding positions include tyrosine 111–asparagine 113 and serine 128. Cysteine 171 serves as a coordination point for [4Fe-4S] cluster. Residues histidine 197–glutamate 199 and threonine 214 contribute to the iminosuccinate site. Cysteine 259 is a binding site for [4Fe-4S] cluster.

Belongs to the quinolinate synthase family. Type 2 subfamily. The cofactor is [4Fe-4S] cluster.

The protein resides in the cytoplasm. It carries out the reaction iminosuccinate + dihydroxyacetone phosphate = quinolinate + phosphate + 2 H2O + H(+). The protein operates within cofactor biosynthesis; NAD(+) biosynthesis; quinolinate from iminoaspartate: step 1/1. Its function is as follows. Catalyzes the condensation of iminoaspartate with dihydroxyacetone phosphate to form quinolinate. This is Quinolinate synthase from Clostridium acetobutylicum (strain ATCC 824 / DSM 792 / JCM 1419 / IAM 19013 / LMG 5710 / NBRC 13948 / NRRL B-527 / VKM B-1787 / 2291 / W).